A 302-amino-acid chain; its full sequence is MIEGQTSVPGEPDPSGTDTTLVVVTGVSGGGRSTVARALENVGYYVVDNLPQALMLDMAELAMKAGGAARRTAMVLDVRSRAFSTDLVGAIRELKERGFGPRVVFVDADDEVLIRRFESVRRSHPLQGEGRLADGIAVERGLLEGARDQADVFVDTSHLNVNQLRRRIEELFGAEDARRLRVTVVSFGFKYGVPPDADFVCDARFLPNPYWVPELREHTGQVEAVSSYVLGQAGAEDFVATYADLLNATTAGFEREGKRYVTAAVGCTGGKHRSVAIAEELAARLRQTGLAATAQHRDLGRE.

Gly-26–Ser-33 is a binding site for ATP. GTP is bound at residue Asp-77–Ser-80.

This sequence belongs to the RapZ-like family.

Displays ATPase and GTPase activities. The chain is Nucleotide-binding protein Strop_3101 from Salinispora tropica (strain ATCC BAA-916 / DSM 44818 / JCM 13857 / NBRC 105044 / CNB-440).